The sequence spans 146 residues: Transcriptional regulator MraZ (146 aa).

2 consecutive SpoVT-AbrB domains span residues 4 to 46 and 75 to 118; these read SYEK…SKKS and TIEV…SKEK.

It belongs to the MraZ family. Forms oligomers.

The protein resides in the cytoplasm. Its subcellular location is the nucleoid. In Mycoplasma mobile (strain ATCC 43663 / 163K / NCTC 11711) (Mesomycoplasma mobile), this protein is Transcriptional regulator MraZ.